A 208-amino-acid polypeptide reads, in one-letter code: MVFYFTSSSVNSSTYTIYMGKDKYENEDLIKYGWPEDIWFHVDKLSSAHVYLRLQKGEKIEDIPKEVLMDCAHLVKANSIQGCKMNNVNVVYTPWSNLKKTADMDVGQIGFHRQKDVKIVTVEKKVNEILNRLEKTKLEKFPDLAAEKEGRDREERNEKKAQIQEMKRKEKEEMKKKREMDELRSYSSLMKVENMSSNQDGNDSDEFM.

Over 1 to 105 (MVFYFTSSSV…SNLKKTADMD (105 aa)) the chain is Extracellular. Positions 21–25 (KDKYE) are DNA-binding. At lysine 23 the chain carries N6-acetyllysine. A helical membrane pass occupies residues 106–122 (VGQIGFHRQKDVKIVTV). Residues 117 to 187 (VKIVTVEKKV…REMDELRSYS (71 aa)) are a coiled coil. The Cytoplasmic portion of the chain corresponds to 123-208 (EKKVNEILNR…QDGNDSDEFM (86 aa)). The segment covering 144-184 (LAAEKEGRDREERNEKKAQIQEMKRKEKEEMKKKREMDELR) has biased composition (basic and acidic residues). The disordered stretch occupies residues 144–208 (LAAEKEGRDR…QDGNDSDEFM (65 aa)). The residue at position 204 (serine 204) is a Phosphoserine.

This sequence belongs to the CCDC25 family. Interacts (via cytoplasmic region) with ILK.

The protein resides in the cell membrane. Its subcellular location is the endomembrane system. Its function is as follows. Transmembrane receptor that senses neutrophil extracellular traps (NETs) and triggers the ILK-PARVB pathway to enhance cell motility. NETs are mainly composed of DNA fibers and are released by neutrophils to bind pathogens during inflammation. Formation of NETs is also associated with cancer metastasis, NET-DNA acting as a chemotactic factor to attract cancer cells. Specifically binds NETs on its extracellular region, in particular the 8-OHdG-enriched DNA present in NETs, and recruits ILK, initiating the ILK-PARVB cascade to induce cytoskeleton rearrangement and directional migration of cells. In the context of cancer, promotes cancer metastasis by sensing NETs and promoting migration of tumor cells. The protein is Coiled-coil domain-containing protein 25 of Mus musculus (Mouse).